The chain runs to 451 residues: Metalloprotease MJ0996 (451 aa).

It belongs to the peptidase U62 family.

Its function is as follows. Probable metalloprotease. In Methanocaldococcus jannaschii (strain ATCC 43067 / DSM 2661 / JAL-1 / JCM 10045 / NBRC 100440) (Methanococcus jannaschii), this protein is Metalloprotease MJ0996.